A 545-amino-acid chain; its full sequence is Cytochrome P450 monooxygenase 212 (545 aa).

The signal sequence occupies residues 1–14 (MAAYAWLYCALALG). Cys-486 serves as a coordination point for heme.

It belongs to the cytochrome P450 family. The cofactor is heme.

The protein operates within secondary metabolite biosynthesis. Cytochrome P450 monooxygenase that is able to use anthracene and pyrene as substrates for oxidation. The protein is Cytochrome P450 monooxygenase 212 of Postia placenta (strain ATCC 44394 / Madison 698-R) (Brown rot fungus).